The primary structure comprises 117 residues: NADH-ubiquinone oxidoreductase chain 3 (117 aa).

Helical transmembrane passes span 4–24 (IILI…LASI), 60–80 (ITII…MIII), and 86–106 (IMIW…GLYH).

It belongs to the complex I subunit 3 family.

The protein resides in the mitochondrion membrane. It carries out the reaction a ubiquinone + NADH + 5 H(+)(in) = a ubiquinol + NAD(+) + 4 H(+)(out). Core subunit of the mitochondrial membrane respiratory chain NADH dehydrogenase (Complex I) that is believed to belong to the minimal assembly required for catalysis. Complex I functions in the transfer of electrons from NADH to the respiratory chain. The immediate electron acceptor for the enzyme is believed to be ubiquinone. This is NADH-ubiquinone oxidoreductase chain 3 (mt:ND3) from Drosophila subobscura (Fruit fly).